Here is a 198-residue protein sequence, read N- to C-terminus: Holliday junction branch migration complex subunit RuvA (198 aa).

The segment at 1 to 63 (MYSYIIGVIT…EDASILYGFS (63 aa)) is domain I. Residues 64 to 142 (SQKERELFNL…KDFVPSEKPV (79 aa)) are domain II. The interval 143–153 (NKEVKRSNDSE) is flexible linker. The domain III stretch occupies residues 153-198 (EFAREALLQLGYFKNDVDAFIENTDISGLSIEDIMKKAMKSLDSSR).

The protein belongs to the RuvA family. As to quaternary structure, homotetramer. Forms an RuvA(8)-RuvB(12)-Holliday junction (HJ) complex. HJ DNA is sandwiched between 2 RuvA tetramers; dsDNA enters through RuvA and exits via RuvB. An RuvB hexamer assembles on each DNA strand where it exits the tetramer. Each RuvB hexamer is contacted by two RuvA subunits (via domain III) on 2 adjacent RuvB subunits; this complex drives branch migration. In the full resolvosome a probable DNA-RuvA(4)-RuvB(12)-RuvC(2) complex forms which resolves the HJ.

The protein resides in the cytoplasm. In terms of biological role, the RuvA-RuvB-RuvC complex processes Holliday junction (HJ) DNA during genetic recombination and DNA repair, while the RuvA-RuvB complex plays an important role in the rescue of blocked DNA replication forks via replication fork reversal (RFR). RuvA specifically binds to HJ cruciform DNA, conferring on it an open structure. The RuvB hexamer acts as an ATP-dependent pump, pulling dsDNA into and through the RuvAB complex. HJ branch migration allows RuvC to scan DNA until it finds its consensus sequence, where it cleaves and resolves the cruciform DNA. This is Holliday junction branch migration complex subunit RuvA from Finegoldia magna (strain ATCC 29328 / DSM 20472 / WAL 2508) (Peptostreptococcus magnus).